Consider the following 654-residue polypeptide: Peptide-N(4)-(N-acetyl-beta-glucosaminyl)asparagine amidase (654 aa).

Ala-2 is modified (N-acetylalanine). Residues 30–91 enclose the PUB domain; sequence EASKLLLTYA…EGETHLIFPK (62 aa). The span at 112–123 shows a compositional bias: basic and acidic residues; it reads RLDGSNKSHKVE. Positions 112-167 are disordered; the sequence is RLDGSNKSHKVESSQQPAASTQLPTTPSSNPSGLNQHTRNRQGQSPDPPSASTVTP. Residues 124-167 show a composition bias toward polar residues; sequence SSQQPAASTQLPTTPSSNPSGLNQHTRNRQGQSPDPPSASTVTP. Thr-137 bears the Phosphothreonine mark. Cys-250, Cys-253, Cys-283, and Cys-286 together coordinate Zn(2+). Cys-309 acts as the Nucleophile in catalysis. Active-site residues include His-336 and Asp-353. The 201-residue stretch at 454-654 folds into the PAW domain; sequence ELGGRISGSV…LEIIIKFSDL (201 aa).

Belongs to the transglutaminase-like superfamily. PNGase family. Component of a complex required to couple retrotranslocation, ubiquitination and deglycosylation composed of NGLY1, SAKS1, AMFR, VCP and RAD23B. Interacts with the proteasome components RAD23B and PSMC1. Interacts with directly with VCP. Interacts with DERL1, bringing it close to the endoplasmic reticulum membrane. Interacts with SAKS1. Zn(2+) serves as cofactor.

Its subcellular location is the cytoplasm. The catalysed reaction is Hydrolysis of an N(4)-(acetyl-beta-D-glucosaminyl)asparagine residue in which the glucosamine residue may be further glycosylated, to yield a (substituted) N-acetyl-beta-D-glucosaminylamine and a peptide containing an aspartate residue.. Its activity is regulated as follows. Inhibited by Z-VAD-fmk, a well-known caspase inhibitor, which inhibits enzyme activity through covalent binding of the carbohydrate to the single Cys-306 residue. In terms of biological role, specifically deglycosylates the denatured form of N-linked glycoproteins in the cytoplasm and assists their proteasome-mediated degradation. Cleaves the beta-aspartyl-glucosamine (GlcNAc) of the glycan and the amide side chain of Asn, converting Asn to Asp. Prefers proteins containing high-mannose over those bearing complex type oligosaccharides. Can recognize misfolded proteins in the endoplasmic reticulum that are exported to the cytosol to be destroyed and deglycosylate them, while it has no activity toward native proteins. Deglycosylation is a prerequisite for subsequent proteasome-mediated degradation of some, but not all, misfolded glycoproteins. This is Peptide-N(4)-(N-acetyl-beta-glucosaminyl)asparagine amidase (NGLY1) from Macaca fascicularis (Crab-eating macaque).